A 356-amino-acid chain; its full sequence is Homoserine O-acetyltransferase (356 aa).

The AB hydrolase-1 domain occupies 50 to 335 (NVILVCHALT…DEPYGHDAFL (286 aa)). S146 acts as the Nucleophile in catalysis. A substrate-binding site is contributed by R215. Residues D302 and H331 contribute to the active site. Substrate is bound at residue D332.

The protein belongs to the AB hydrolase superfamily. MetX family. Homodimer.

Its subcellular location is the cytoplasm. The enzyme catalyses L-homoserine + acetyl-CoA = O-acetyl-L-homoserine + CoA. It functions in the pathway amino-acid biosynthesis; L-methionine biosynthesis via de novo pathway; O-acetyl-L-homoserine from L-homoserine: step 1/1. Transfers an acetyl group from acetyl-CoA to L-homoserine, forming acetyl-L-homoserine. In Chlorobaculum tepidum (strain ATCC 49652 / DSM 12025 / NBRC 103806 / TLS) (Chlorobium tepidum), this protein is Homoserine O-acetyltransferase.